The sequence spans 591 residues: Calnexin (591 aa).

Positions 1–20 are cleaved as a signal peptide; it reads MEGKWLLCLLLVLGTAAVEA. Residues 21 to 482 lie on the Lumenal side of the membrane; the sequence is HDGHDDDAID…QMLEAAEERP (462 aa). S75 and D118 together coordinate Ca(2+). K138 is modified (N6-acetyllysine). A disulfide bridge connects residues C161 and C195. 4 residues coordinate an alpha-D-glucoside: Y165, K167, Y186, and D193. The segment at 261-347 is disordered; that stretch reads GNLLNDMTPP…EKPEDWDEDM (87 aa). Basic and acidic residues predominate over residues 275-320; it reads REIEDPEDRKPEDWDERPKIADPDAVKPDDWDEDAPSKIPDEEATK. The interval 277-410 is p domain (Extended arm); it reads IEDPEDRKPE…RKIPNPDFFE (134 aa). 5 tandem repeats follow at residues 279–291, 296–308, 315–327, 334–346, and 349–359. 4 X approximate repeats stretches follow at residues 279 to 346 and 349 to 406; these read DPED…WDED and GEWE…IPNP. Over residues 324-347 the composition is skewed to acidic residues; the sequence is WLDDEPEYIPDPDAEKPEDWDEDM. Residues 327-360 are interaction with PPIB; sequence DEPEYIPDPDAEKPEDWDEDMDGEWEAPQIANPK. C361 and C367 are joined by a disulfide. 3 tandem repeats follow at residues 368-378, 382-392, and 396-406. E426 provides a ligand contact to an alpha-D-glucoside. D437 serves as a coordination point for Ca(2+). The chain crosses the membrane as a helical span at residues 483–503; that stretch reads WLWVVYILTVALPVFLVILFC. 2 S-palmitoyl cysteine lipidation sites follow: C503 and C504. At 504–591 the chain is on the cytoplasmic side; the sequence is CSGKKQSNAM…SPRNRKPRRE (88 aa). The sufficient to mediate interaction with SGIP1 stretch occupies residues 504 to 591; it reads CSGKKQSNAM…SPRNRKPRRE (88 aa). The span at 514–539 shows a compositional bias: basic and acidic residues; it reads EYKKTDAPQPDVKDEEGKEEEKNKRD. The interval 514–591 is disordered; that stretch reads EYKKTDAPQP…SPRNRKPRRE (78 aa). A Phosphoserine modification is found at S553. Residues 555–568 show a composition bias toward acidic residues; the sequence is AEEDGVTGSQDEED. T561 bears the Phosphothreonine mark. S563 carries the post-translational modification Phosphoserine; by MAPK3. Position 582 is a phosphoserine (S582).

The protein belongs to the calreticulin family. Interacts with MAPK3/ERK1. Interacts with KCNH2. Associates with ribosomes. The palmitoylated form interacts with the ribosome-translocon complex component SSR1, promoting efficient folding of glycoproteins. Interacts with SERPINA2P/SERPINA2 and with the S and Z variants of SERPINA1. Interacts with SGIP1; involved in negative regulation of endocytosis. Interacts with PPIB. Interacts with SMIM22. Interacts with TMX2. Interacts with TMEM35A/NACHO. Interacts with CHRNA7. Interacts with reticulophagy regulators RETREG2 and RETREG3. Interacts with DNM1L; may form part of a larger protein complex at the ER-mitochondrial interface during mitochondrial fission. Interacts with ADAM7. Post-translationally, phosphorylated at Ser-563 by MAPK3/ERK1. Phosphorylation by MAPK3/ERK1 increases its association with ribosomes. Palmitoylation by DHHC6 leads to the preferential localization to the perinuclear rough ER. It mediates the association of calnexin with the ribosome-translocon complex (RTC) which is required for efficient folding of glycosylated proteins. In terms of processing, ubiquitinated, leading to proteasomal degradation. Probably ubiquitinated by ZNRF4. As to expression, expressed in sperm (at protein level).

The protein localises to the endoplasmic reticulum membrane. It localises to the mitochondrion membrane. The protein resides in the melanosome membrane. Functionally, calcium-binding protein that interacts with newly synthesized monoglucosylated glycoproteins in the endoplasmic reticulum. It may act in assisting protein assembly and/or in the retention within the ER of unassembled protein subunits. It seems to play a major role in the quality control apparatus of the ER by the retention of incorrectly folded proteins. Associated with partial T-cell antigen receptor complexes that escape the ER of immature thymocytes, it may function as a signaling complex regulating thymocyte maturation. Additionally it may play a role in receptor-mediated endocytosis at the synapse. The polypeptide is Calnexin (Canx) (Mus musculus (Mouse)).